Reading from the N-terminus, the 489-residue chain is Acetyl-coenzyme A carboxylase carboxyl transferase subunit beta, chloroplastic (489 aa).

A CoA carboxyltransferase N-terminal domain is found at leucine 225–lysine 489. Residues cysteine 229, cysteine 232, cysteine 245, and cysteine 248 each contribute to the Zn(2+) site. The segment at cysteine 229–cysteine 248 adopts a C4-type zinc-finger fold.

Belongs to the AccD/PCCB family. In terms of assembly, acetyl-CoA carboxylase is a heterohexamer composed of biotin carboxyl carrier protein, biotin carboxylase and 2 subunits each of ACCase subunit alpha and ACCase plastid-coded subunit beta (accD). Zn(2+) is required as a cofactor.

The protein resides in the plastid. Its subcellular location is the chloroplast stroma. It carries out the reaction N(6)-carboxybiotinyl-L-lysyl-[protein] + acetyl-CoA = N(6)-biotinyl-L-lysyl-[protein] + malonyl-CoA. The protein operates within lipid metabolism; malonyl-CoA biosynthesis; malonyl-CoA from acetyl-CoA: step 1/1. Component of the acetyl coenzyme A carboxylase (ACC) complex. Biotin carboxylase (BC) catalyzes the carboxylation of biotin on its carrier protein (BCCP) and then the CO(2) group is transferred by the transcarboxylase to acetyl-CoA to form malonyl-CoA. The protein is Acetyl-coenzyme A carboxylase carboxyl transferase subunit beta, chloroplastic of Brassica napus (Rape).